A 748-amino-acid chain; its full sequence is MLWTLPVCLLSLSFSAHIAAVSIQHLSTGHDHDDVDVGEQQKDISEINSAAGLNLFQGDILLPRTRNALRDPSSRWKLPIPYILADNLDLNAKGAILNAFEMFRLKSCVDFKPYEGESSYIIFQQFSGCWSMVGDQHVGQNISIGEGCDYKAIIEHEILHALGFFHEQSRTDRDDYVNIWWNEIMTDYEHNFNTYDDKTITDLNTPYDYESLMHYGPFSFNKNETIPTITTKIPEFNAIIGQRLDFSATDLTRLNRMYNCTRTHTLLDHCAFEKTNICGMIQGTRDDADWVHEDSSQPGQVDHTLVGRCKAAGYFMYFNTSSGVTGEVALLESRILYPKRKQQCLQFFYKMTGSPADRLLIWVRRDDNTGNVCQLAKIQTFQGDSDHNWKIAHVTLNEEKKFRYVFQGTKGDPGNSDGGIYLDDITLTETPCPTGVWTIRNISQVLENTVKGDRLVSPRFYNSEGYGFGVTLYPNGRITSNSGYLGLAFHLYSGDNDVILEWPVENRQAIMTILDQEPDARNRMSLSLMFTTSKYQTSSAINGSVIWDRPTKVGVYDKDCDCFRSIDWGWGQAISHQMLMRRNFLKDDTLIIFVDFKDLTHLRQTEVPIPSRSVIPRGLLLQGQEPLALGDSRIAMMEESLPRRLDQRQPSRPKRSVENTGPMEDHNWPQYFRDPCDPNPCQNEGTCVNVKGMASCRCVSGHAFFYTGERCQAMHVHGSLLGLLIGCITALIFLTFITFSNTYQKLRQ.

An N-terminal signal peptide occupies residues 1 to 20; the sequence is MLWTLPVCLLSLSFSAHIAA. The propeptide occupies 21-66; that stretch reads VSIQHLSTGHDHDDVDVGEQQKDISEINSAAGLNLFQGDILLPRTR. One can recognise a Peptidase M12A domain in the interval 67–261; it reads NALRDPSSRW…TRLNRMYNCT (195 aa). The Extracellular portion of the chain corresponds to 67 to 719; it reads NALRDPSSRW…RCQAMHVHGS (653 aa). Cystine bridges form between Cys-108/Cys-260, Cys-129/Cys-148, and Cys-270/Cys-432. Residue Asn-141 is glycosylated (N-linked (GlcNAc...) asparagine). Residue His-156 participates in Zn(2+) binding. Glu-157 is an active-site residue. Zn(2+) is bound by residues His-160 and His-166. Residues Asn-223, Asn-259, Asn-319, Asn-441, and Asn-542 are each glycosylated (N-linked (GlcNAc...) asparagine). The 170-residue stretch at 265–434 folds into the MAM domain; sequence TLLDHCAFEK…ITLTETPCPT (170 aa). Residues 435-596 enclose the MATH domain; that stretch reads GVWTIRNISQ…DDTLIIFVDF (162 aa). The tract at residues 641–668 is disordered; sequence LPRRLDQRQPSRPKRSVENTGPMEDHNW. In terms of domain architecture, EGF-like spans 672 to 712; sequence FRDPCDPNPCQNEGTCVNVKGMASCRCVSGHAFFYTGERCQ. Intrachain disulfides connect Cys-676-Cys-687, Cys-681-Cys-696, and Cys-698-Cys-711. A helical membrane pass occupies residues 720 to 739; that stretch reads LLGLLIGCITALIFLTFITF. The Cytoplasmic segment spans residues 740-748; sequence SNTYQKLRQ.

As to quaternary structure, homotetramer consisting of disulfide-linked alpha subunits, homooligomer consisting of disulfide-linked alpha subunit homodimers, or heterotetramer of two alpha and two beta subunits formed by non-covalent association of two disulfide-linked heterodimers. Interacts with MBL2 through its carbohydrate moiety. This interaction may inhibit its catalytic activity. The cofactor is Zn(2+). In terms of processing, N-glycosylated; contains GlcNAc, galactose, mannose and a small amount of fucose. As to expression, colocalized with E-24.11 in proximal tubules of juxtamedullary nephrons.

It localises to the membrane. It carries out the reaction Hydrolysis of protein and peptide substrates preferentially on carboxyl side of hydrophobic residues.. Its activity is regulated as follows. Inhibited by actinonin. The polypeptide is Meprin A subunit alpha (Mep1a) (Rattus norvegicus (Rat)).